Consider the following 295-residue polypeptide: Phosphoribosylaminoimidazole-succinocarboxamide synthase (295 aa).

Belongs to the SAICAR synthetase family.

The enzyme catalyses 5-amino-1-(5-phospho-D-ribosyl)imidazole-4-carboxylate + L-aspartate + ATP = (2S)-2-[5-amino-1-(5-phospho-beta-D-ribosyl)imidazole-4-carboxamido]succinate + ADP + phosphate + 2 H(+). Its pathway is purine metabolism; IMP biosynthesis via de novo pathway; 5-amino-1-(5-phospho-D-ribosyl)imidazole-4-carboxamide from 5-amino-1-(5-phospho-D-ribosyl)imidazole-4-carboxylate: step 1/2. The protein is Phosphoribosylaminoimidazole-succinocarboxamide synthase of Nitrosomonas europaea (strain ATCC 19718 / CIP 103999 / KCTC 2705 / NBRC 14298).